A 420-amino-acid polypeptide reads, in one-letter code: MAPWPPKGLVPAMLWGLSLFLNLPGPIWLQPSPPPQSSPPPQPHPCHTCRGLVDSFNKGLERTIRDNFGGGNTAWEEENLSKYKDSETRLVEVLEGVCSKSDFECHRLLELSEELVESWWFHKQQEAPDLFQWLCSDSLKLCCPAGTFGPSCLPCPGGTERPCGGYGQCEGEGTRGGSGHCDCQAGYGGEACGQCGLGYFEAERNASHLVCSACFGPCARCSGPEESNCLQCKKGWALHHLKCVDIDECGTEGANCGADQFCVNTEGSYECRDCAKACLGCMGAGPGRCKKCSPGYQQVGSKCLDVDECETEVCPGENKQCENTEGGYRCICAEGYKQMEGICVKEQIPESAGFFSEMTEDELVVLQQMFFGIIICALATLAAKGDLVFTAIFIGAVAAMTGYWLSERSDRVLEGFIKGR.

Residues methionine 1 to leucine 29 form the signal peptide. Over glutamine 30–glutamate 362 the chain is Extracellular. The short motif at cysteine 46 to cysteine 49 is the CXXC element. A disulfide bridge connects residues cysteine 46 and cysteine 49. An N-linked (GlcNAc...) asparagine glycan is attached at asparagine 79. Residues leucine 153–glycine 193 form the EGF-like 1 domain. Intrachain disulfides connect cysteine 155/cysteine 169, cysteine 163/cysteine 181, and cysteine 183/cysteine 192. Asparagine 205 carries an N-linked (GlcNAc...) asparagine glycan. 2 FU repeats span residues histidine 208–cysteine 256 and serine 268–proline 315. The short motif at cysteine 278–cysteine 281 is the CXXC element. Cystine bridges form between cysteine 278/cysteine 281, cysteine 309/cysteine 321, cysteine 314/cysteine 330, and cysteine 332/cysteine 343. An EGF-like 2; calcium-binding domain is found at aspartate 305–valine 344. Residues leucine 363–alanine 383 traverse the membrane as a helical segment. A topological domain (cytoplasmic) is located at residue lysine 384. A helical membrane pass occupies residues glycine 385–leucine 405. Residues serine 406 to arginine 420 lie on the Extracellular side of the membrane.

The protein belongs to the CRELD family. In terms of tissue distribution, highly expressed in fetal lung, liver, kidney, adult heart, brain and skeletal muscle. Weakly expressed in placenta, fetal brain, and adult lung, liver, kidney and pancreas.

The protein localises to the membrane. It catalyses the reaction Catalyzes the rearrangement of -S-S- bonds in proteins.. Its function is as follows. Protein disulfide isomerase. Promotes the localization of acetylcholine receptors (AChRs) to the plasma membrane. The sequence is that of Protein disulfide isomerase CRELD1 (CRELD1) from Homo sapiens (Human).